A 657-amino-acid polypeptide reads, in one-letter code: Archaeal Lon protease (657 aa).

Topologically, residues 1 to 123 (MEENIESVEE…KAEREKRDRS (123 aa)) are cytoplasmic. 57–64 (GEPGTGKS) contributes to the ATP binding site. The helical transmembrane segment at 124 to 144 (RSIMFVIFSVVLLGIIAAIVL) threads the bilayer. R145 is a topological domain (extracellular). A helical membrane pass occupies residues 146–166 (SITLIFFAIMAAAFLYMAMAF). The Cytoplasmic segment spans residues 167–657 (NPVIRNERAM…ATTRAGNNAA (491 aa)). The region spanning 433–618 (GSVVGMVNGL…EDVLRVALVN (186 aa)) is the Lon proteolytic domain. Residues S525 and K568 contribute to the active site.

It belongs to the peptidase S16 family. Archaeal LonB subfamily. Homohexamer. Organized in a ring with a central cavity.

The protein localises to the cell membrane. Its function is as follows. ATP-dependent serine protease that mediates the selective degradation of mutant and abnormal proteins as well as certain short-lived regulatory proteins. Degrades polypeptides processively. The chain is Archaeal Lon protease from Thermoplasma acidophilum (strain ATCC 25905 / DSM 1728 / JCM 9062 / NBRC 15155 / AMRC-C165).